The primary structure comprises 131 residues: Holo-[acyl-carrier-protein] synthase (131 aa).

2 residues coordinate Mg(2+): aspartate 8 and glutamate 59.

It belongs to the P-Pant transferase superfamily. AcpS family. It depends on Mg(2+) as a cofactor.

It localises to the cytoplasm. It catalyses the reaction apo-[ACP] + CoA = holo-[ACP] + adenosine 3',5'-bisphosphate + H(+). Its function is as follows. Transfers the 4'-phosphopantetheine moiety from coenzyme A to a Ser of acyl-carrier-protein. The polypeptide is Holo-[acyl-carrier-protein] synthase (Rickettsia massiliae (strain Mtu5)).